Here is a 687-residue protein sequence, read N- to C-terminus: Probable ATP-dependent RNA helicase Dbp73D (687 aa).

Disordered stretches follow at residues 1 to 26 and 52 to 87; these read MELF…TNNE and TPIL…EEDV. 2 stretches are compositionally biased toward basic and acidic residues: residues 9–18 and 54–79; these read YTEDLKEQKD and ILEK…EKPL. A Q motif motif is present at residues 160–168; sequence LFPVQKQVI. The 205-residue stretch at 177 to 381 folds into the Helicase ATP-binding domain; that stretch reads KPPPFRPRDI…DLRLFQPRLF (205 aa). 190–197 is a binding site for ATP; that stretch reads APTGSGKT. Residues 305–308 carry the DEAD box motif; it reads DEAD. A Helicase C-terminal domain is found at 434 to 583; sequence TVFALVEKYK…EIHVSPDIEI (150 aa). The interval 646-675 is disordered; the sequence is IVQSSKKSSETKNSKTKADKTKYQPKETKK. The span at 652–675 shows a compositional bias: basic and acidic residues; that stretch reads KSSETKNSKTKADKTKYQPKETKK.

The protein belongs to the DEAD box helicase family. DDX51/DBP6 subfamily. Expressed in the germline tissue of the ovary.

The protein resides in the nucleus. The protein localises to the nucleolus. It catalyses the reaction ATP + H2O = ADP + phosphate + H(+). In terms of biological role, ATP-binding RNA helicase involved in the biogenesis of 60S ribosomal subunits. In Drosophila melanogaster (Fruit fly), this protein is Probable ATP-dependent RNA helicase Dbp73D (Dbp73D).